Here is a 495-residue protein sequence, read N- to C-terminus: Probable cytosol aminopeptidase (495 aa).

Lysine 261 and aspartate 266 together coordinate Mn(2+). Lysine 273 is an active-site residue. The Mn(2+) site is built by aspartate 284, aspartate 343, and glutamate 345. The active site involves arginine 347.

Belongs to the peptidase M17 family. Mn(2+) is required as a cofactor.

It localises to the cytoplasm. It carries out the reaction Release of an N-terminal amino acid, Xaa-|-Yaa-, in which Xaa is preferably Leu, but may be other amino acids including Pro although not Arg or Lys, and Yaa may be Pro. Amino acid amides and methyl esters are also readily hydrolyzed, but rates on arylamides are exceedingly low.. It catalyses the reaction Release of an N-terminal amino acid, preferentially leucine, but not glutamic or aspartic acids.. Functionally, presumably involved in the processing and regular turnover of intracellular proteins. Catalyzes the removal of unsubstituted N-terminal amino acids from various peptides. This Chelativorans sp. (strain BNC1) protein is Probable cytosol aminopeptidase.